The chain runs to 129 residues: D-ribose pyranase (129 aa).

The active-site Proton donor is the histidine 20. Residues aspartate 28, histidine 96, and 118–120 (YAN) each bind substrate.

This sequence belongs to the RbsD / FucU family. RbsD subfamily. Homodecamer.

Its subcellular location is the cytoplasm. It carries out the reaction beta-D-ribopyranose = beta-D-ribofuranose. The protein operates within carbohydrate metabolism; D-ribose degradation; D-ribose 5-phosphate from beta-D-ribopyranose: step 1/2. Its function is as follows. Catalyzes the interconversion of beta-pyran and beta-furan forms of D-ribose. The sequence is that of D-ribose pyranase from Halalkalibacterium halodurans (strain ATCC BAA-125 / DSM 18197 / FERM 7344 / JCM 9153 / C-125) (Bacillus halodurans).